The following is a 2293-amino-acid chain: Protein Ycf2 (2293 aa).

1642-1649 is a binding site for ATP; the sequence is GSIGTGRS.

Belongs to the Ycf2 family.

It localises to the plastid. It is found in the chloroplast stroma. In terms of biological role, probable ATPase of unknown function. Its presence in a non-photosynthetic plant (Epifagus virginiana) and experiments in tobacco indicate that it has an essential function which is probably not related to photosynthesis. The protein is Protein Ycf2 of Platanus occidentalis (Sycamore).